Reading from the N-terminus, the 96-residue chain is Methanol dehydrogenase [cytochrome c] subunit 2 (96 aa).

Residues 1-22 form the signal peptide; that stretch reads MKTTLIAAAIVALSGLAAPALA. Residues Cys28 and Cys34 are joined by a disulfide bond. Positions 45–75 are disordered; sequence IAGSKYDPKHDPKELNKQADSIKQMEERNKK. Residues 50-61 show a composition bias toward basic and acidic residues; it reads YDPKHDPKELNK.

It belongs to the methanol dehydrogenase subunit 2 family. In terms of assembly, heterotetramer composed of 2 alpha and 2 beta subunits.

It is found in the periplasm. The catalysed reaction is 2 Fe(III)-[cytochrome cL] + a primary alcohol = 2 Fe(II)-[cytochrome cL] + an aldehyde + 2 H(+). Functionally, catalyzes the oxidation of primary alcohols including methanol. The protein is Methanol dehydrogenase [cytochrome c] subunit 2 (moxI) of Methylorubrum extorquens (strain ATCC 14718 / DSM 1338 / JCM 2805 / NCIMB 9133 / AM1) (Methylobacterium extorquens).